We begin with the raw amino-acid sequence, 686 residues long: tRNA 5-methylaminomethyl-2-thiouridine biosynthesis bifunctional protein MnmC (686 aa).

The segment at 1–258 (MPNIPLRVNS…RRALRRQQLD (258 aa)) is tRNA (mnm(5)s(2)U34)-methyltransferase. The interval 276-686 (IGGGVASANL…MRKLIKGKAL (411 aa)) is FAD-dependent cmnm(5)s(2)U34 oxidoreductase.

It in the N-terminal section; belongs to the methyltransferase superfamily. tRNA (mnm(5)s(2)U34)-methyltransferase family. In the C-terminal section; belongs to the DAO family. The cofactor is FAD.

Its subcellular location is the cytoplasm. It carries out the reaction 5-aminomethyl-2-thiouridine(34) in tRNA + S-adenosyl-L-methionine = 5-methylaminomethyl-2-thiouridine(34) in tRNA + S-adenosyl-L-homocysteine + H(+). Functionally, catalyzes the last two steps in the biosynthesis of 5-methylaminomethyl-2-thiouridine (mnm(5)s(2)U) at the wobble position (U34) in tRNA. Catalyzes the FAD-dependent demodification of cmnm(5)s(2)U34 to nm(5)s(2)U34, followed by the transfer of a methyl group from S-adenosyl-L-methionine to nm(5)s(2)U34, to form mnm(5)s(2)U34. This is tRNA 5-methylaminomethyl-2-thiouridine biosynthesis bifunctional protein MnmC from Shewanella loihica (strain ATCC BAA-1088 / PV-4).